A 398-amino-acid polypeptide reads, in one-letter code: Chalcone synthase (398 aa).

C169 is a catalytic residue.

Belongs to the thiolase-like superfamily. Chalcone/stilbene synthases family.

The enzyme catalyses (E)-4-coumaroyl-CoA + 3 malonyl-CoA + 3 H(+) = 2',4,4',6'-tetrahydroxychalcone + 3 CO2 + 4 CoA. It participates in secondary metabolite biosynthesis; flavonoid biosynthesis. In terms of biological role, the primary product of this enzyme is 4,2',4',6'-tetrahydroxychalcone (also termed naringenin-chalcone or chalcone) which can under specific conditions spontaneously isomerize into naringenin. This chain is Chalcone synthase (CHS), found in Petroselinum crispum (Parsley).